The primary structure comprises 118 residues: Putative pterin-4-alpha-carbinolamine dehydratase (118 aa).

Belongs to the pterin-4-alpha-carbinolamine dehydratase family.

It carries out the reaction (4aS,6R)-4a-hydroxy-L-erythro-5,6,7,8-tetrahydrobiopterin = (6R)-L-erythro-6,7-dihydrobiopterin + H2O. This is Putative pterin-4-alpha-carbinolamine dehydratase from Pseudomonas putida (strain ATCC 700007 / DSM 6899 / JCM 31910 / BCRC 17059 / LMG 24140 / F1).